A 552-amino-acid chain; its full sequence is 5'-AMP-activated protein kinase catalytic subunit alpha-2 (552 aa).

The region spanning 16–268 (YVLGDTLGVG…IKDIREHEWF (253 aa)) is the Protein kinase domain. Residues 22–30 (LGVGTFGKV) and Lys45 each bind ATP. Catalysis depends on Asp139, which acts as the Proton acceptor. A Phosphothreonine; by LKB1 and CaMKK2 modification is found at Thr172. Thr258 is subject to Phosphothreonine. The interval 291 to 376 (EAVKEVCEKF…PERMPPLIAD (86 aa)) is AIS. Residue Ser377 is modified to Phosphoserine. A disordered region spans residues 478-520 (EQRSGSSTPQRSCSAAGLHRPRSSVDSSTAENHSLSGSLTGSL). The segment covering 480 to 490 (RSGSSTPQRSC) has biased composition (polar residues). A Phosphoserine modification is found at Ser491. The segment covering 501–510 (SVDSSTAENH) has biased composition (polar residues). Residues 511-520 (SLSGSLTGSL) are compositionally biased toward low complexity.

The protein belongs to the protein kinase superfamily. CAMK Ser/Thr protein kinase family. SNF1 subfamily. As to quaternary structure, AMPK is a heterotrimer of an alpha catalytic subunit (PRKAA1 or PRKAA2), a beta (PRKAB1 or PRKAB2) and a gamma non-catalytic subunits (PRKAG1, PRKAG2 or PRKAG3). Interacts with FNIP1 and FNIP2. Associates with internalized INSR complexes on Golgi/endosomal membranes; PRKAA2/AMPK2 together with ATIC and HACD3/PTPLAD1 is proposed to be part of a signaling network regulating INSR autophosphorylation and endocytosis. Interacts with DUSP29. Interacts with ARF6. The phosphorylated form at Thr-172 mediated by CamKK2 interacts with ACSS2. It depends on Mg(2+) as a cofactor. In terms of processing, ubiquitinated. Phosphorylated at Thr-172 by STK11/LKB1 in complex with STE20-related adapter-alpha (STRADA) pseudo kinase and CAB39. Also phosphorylated at Thr-172 by CAMKK2; triggered by a rise in intracellular calcium ions, without detectable changes in the AMP/ATP ratio. CAMKK1 can also phosphorylate Thr-172, but at much lower level. Dephosphorylated by protein phosphatase 2A and 2C (PP2A and PP2C). Phosphorylated by ULK1; leading to negatively regulate AMPK activity and suggesting the existence of a regulatory feedback loop between ULK1 and AMPK. Dephosphorylated by PPM1A and PPM1B at Thr-172 (mediated by STK11/LKB1). Skeletal muscle, lower levels in liver, heart and kidney.

The protein localises to the cytoplasm. It is found in the nucleus. It carries out the reaction L-seryl-[protein] + ATP = O-phospho-L-seryl-[protein] + ADP + H(+). It catalyses the reaction L-threonyl-[protein] + ATP = O-phospho-L-threonyl-[protein] + ADP + H(+). The catalysed reaction is L-seryl-[acetyl-CoA carboxylase] + ATP = O-phospho-L-seryl-[acetyl-CoA carboxylase] + ADP + H(+). The enzyme catalyses L-seryl-[3-hydroxy-3-methylglutaryl-coenzyme A reductase] + ATP = O-phospho-L-seryl-[3-hydroxy-3-methylglutaryl-coenzyme A reductase] + ADP + H(+). Activated by phosphorylation on Thr-172. Binding of AMP to non-catalytic gamma subunit (PRKAG1, PRKAG2 or PRKAG3) results in allosteric activation, inducing phosphorylation on Thr-172. AMP-binding to gamma subunit also sustains activity by preventing dephosphorylation of Thr-172. ADP also stimulates Thr-172 phosphorylation, without stimulating already phosphorylated AMPK. ATP promotes dephosphorylation of Thr-172, rendering the enzyme inactive. Under physiological conditions AMPK mainly exists in its inactive form in complex with ATP, which is much more abundant than AMP. Selectively inhibited by compound C (6-[4-(2-Piperidin-1-yl-ethoxy)-phenyl)]-3-pyridin-4-yl-pyyrazolo[1,5-a] pyrimidine. Activated by resveratrol, a natural polyphenol present in red wine, and S17834, a synthetic polyphenol. Salicylate/aspirin directly activates kinase activity, primarily by inhibiting Thr-172 dephosphorylation. Its function is as follows. Catalytic subunit of AMP-activated protein kinase (AMPK), an energy sensor protein kinase that plays a key role in regulating cellular energy metabolism. In response to reduction of intracellular ATP levels, AMPK activates energy-producing pathways and inhibits energy-consuming processes: inhibits protein, carbohydrate and lipid biosynthesis, as well as cell growth and proliferation. AMPK acts via direct phosphorylation of metabolic enzymes, and by longer-term effects via phosphorylation of transcription regulators. Regulates lipid synthesis by phosphorylating and inactivating lipid metabolic enzymes such as ACACA, ACACB, GYS1, HMGCR and LIPE; regulates fatty acid and cholesterol synthesis by phosphorylating acetyl-CoA carboxylase (ACACA and ACACB) and hormone-sensitive lipase (LIPE) enzymes, respectively. Promotes lipolysis of lipid droplets by mediating phosphorylation of isoform 1 of CHKA (CHKalpha2). Regulates insulin-signaling and glycolysis by phosphorylating IRS1, PFKFB2 and PFKFB3. Involved in insulin receptor/INSR internalization. AMPK stimulates glucose uptake in muscle by increasing the translocation of the glucose transporter SLC2A4/GLUT4 to the plasma membrane, possibly by mediating phosphorylation of TBC1D4/AS160. Regulates transcription and chromatin structure by phosphorylating transcription regulators involved in energy metabolism such as CRTC2/TORC2, FOXO3, histone H2B, HDAC5, MEF2C, MLXIPL/ChREBP, EP300, HNF4A, p53/TP53, SREBF1, SREBF2 and PPARGC1A. Acts as a key regulator of glucose homeostasis in liver by phosphorylating CRTC2/TORC2, leading to CRTC2/TORC2 sequestration in the cytoplasm. In response to stress, phosphorylates 'Ser-36' of histone H2B (H2BS36ph), leading to promote transcription. Acts as a key regulator of cell growth and proliferation by phosphorylating FNIP1, TSC2, RPTOR, WDR24 and ATG1/ULK1: in response to nutrient limitation, negatively regulates the mTORC1 complex by phosphorylating RPTOR component of the mTORC1 complex and by phosphorylating and activating TSC2. Also phosphorylates and inhibits GATOR2 subunit WDR24 in response to nutrient limitation, leading to suppress glucose-mediated mTORC1 activation. In response to energetic stress, phosphorylates FNIP1, inactivating the non-canonical mTORC1 signaling, thereby promoting nuclear translocation of TFEB and TFE3, and inducing transcription of lysosomal or autophagy genes. In response to nutrient limitation, promotes autophagy by phosphorylating and activating ATG1/ULK1. In that process, it also activates WDR45/WIPI4. Phosphorylates CASP6, thereby preventing its autoprocessing and subsequent activation. AMPK also acts as a regulator of circadian rhythm by mediating phosphorylation of CRY1, leading to destabilize it. May regulate the Wnt signaling pathway by phosphorylating CTNNB1, leading to stabilize it. Also acts as a regulator of cellular polarity by remodeling the actin cytoskeleton; probably by indirectly activating myosin. Also phosphorylates CFTR, EEF2K, KLC1, NOS3 and SLC12A1. Plays an important role in the differential regulation of pro-autophagy (composed of PIK3C3, BECN1, PIK3R4 and UVRAG or ATG14) and non-autophagy (composed of PIK3C3, BECN1 and PIK3R4) complexes, in response to glucose starvation. Can inhibit the non-autophagy complex by phosphorylating PIK3C3 and can activate the pro-autophagy complex by phosphorylating BECN1. Upon glucose starvation, promotes ARF6 activation in a kinase-independent manner leading to cell migration. Upon glucose deprivation mediates the phosphorylation of ACSS2 at 'Ser-659', which exposes the nuclear localization signal of ACSS2, required for its interaction with KPNA1 and nuclear translocation. Upon stress, regulates mitochondrial fragmentation through phosphorylation of MTFR1L. The chain is 5'-AMP-activated protein kinase catalytic subunit alpha-2 (Prkaa2) from Rattus norvegicus (Rat).